The chain runs to 622 residues: MSCLRKPSQSLVLSESVDPTTVDPFVDVRAEEVVPTGCMTLWEYRDSCGDVPGPLSHGDLRRLRTPDGVCKCQIHFEFPTVLKSGSTGTVPEHPAVVAAFMGRPRRCSLEQRTKELDFRFLQLVHEGLPVRPSYMIARPPRPVRGLCSSRDGSLAQFGQGYCYLSAIVDSARWRVARTTGWCVRVADYLRLLQWVGRRSFGSFQIEESTVEHVYHVIVDTEHQSEQDGALFYQAVSDLAARDPLARIGNQLNPLAAEFCPRSARRVEPVTPQVTRRKGLARMPGRSPTVVSVGNVGMAITSIQDALVATELRNVNFGRRDTEAECRRLWARYEVNDYFRRHKAELLKFDARLRSHMAKKPVSVRTRSSDAKIQCIGWRDRHLLPQRLAGLTKQKRSLIWSRFATSNIRRKASACTMTPSVDPMVHTWGDSAALAAKKISEARRRQEICAAAYAERAKARGQTNVVASISEAIETTLRRNGTRFALDGLHVAASVIVTTRLRSWNQEEVLAGREFRKSTTSWIWRHMPSSIQDALNLTSVRDKLDPGRAFGYVQAAVAQGMSDFRRAKRSLAIVAKPVIRNVRDPYDHGFVKRDGKLRHSRDVSNKKLRTKAVAATKVHKIIF.

The Peptidase C7 domain occupies 1–248 (MSCLRKPSQS…AARDPLARIG (248 aa)). Catalysis depends on for papain-like protease p29 activity residues C162 and H215.

In terms of processing, autocatalytically processed.

P40 protein is involved in reduction of conidiation of the host. Not necessary for replication. Also involved in reduction of orange pigmentation of the host. In terms of biological role, cysteine protease of the peptidase family C7 that contributes to hypovirulence-associated traits like the reduction in conidiation and laccase activity, but not to virulence attenuation. Acts as a suppressor of RNA-mediated gene silencing, also known as post-transcriptional gene silencing (PTGS), a mechanism of viral defense that limits the accumulation of viral RNAs. Enhances viral dsRNA accumulation and virus transmission. Also involved in the reduction in orange pigmentation of the host, an effect independent of the intrinsic protease activity. The sequence is that of Polyprotein p69 from Cryphonectria hypovirus 1 (strain Euro7) (CHV-1/Euro7).